We begin with the raw amino-acid sequence, 512 residues long: Centrosomal protein CCDC61 (512 aa).

Met1 is subject to N-acetylmethionine. The tract at residues 1–142 is head domain; the sequence is MEQPAGLQVD…PLPLPYQGKP (142 aa). Coiled coils occupy residues 176 to 203 and 246 to 273; these read WHLR…REEA and RRLA…NCEL. At Thr282 the chain carries Phosphothreonine. 2 disordered regions span residues 282 to 415 and 430 to 472; these read TLPA…SFRS and SQSV…HLAS. A compositionally biased stretch (basic and acidic residues) spans 287–300; that stretch reads AREDRALSSRERST. Ser328, Ser330, Ser372, and Ser375 each carry phosphoserine. The segment covering 406 to 415 has biased composition (low complexity); that stretch reads RSSSVDSFRS. Residues Ser447 and Ser473 each carry the phosphoserine modification.

Belongs to the CCDC61 family. As to quaternary structure, forms homodimers (via head domain). Interacts with CEP170. Interacts with PCM1 and CEP131. Binds tubulin.

It is found in the cytoplasm. It localises to the cytoskeleton. Its subcellular location is the microtubule organizing center. The protein resides in the centrosome. The protein localises to the centriolar satellite. It is found in the cilium basal body. Functionally, microtubule-binding centrosomal protein required for centriole cohesion, independently of the centrosome-associated protein/CEP250 and rootletin/CROCC linker. In interphase, required for anchoring microtubule at the mother centriole subdistal appendages and for centrosome positioning. During mitosis, may be involved in spindle assembly and chromatin alignment by regulating the organization of spindle microtubules into a symmetrical structure. Plays a non-essential role in ciliogenesis. This chain is Centrosomal protein CCDC61, found in Rattus norvegicus (Rat).